We begin with the raw amino-acid sequence, 97 residues long: Co-chaperonin GroES (97 aa).

It belongs to the GroES chaperonin family. As to quaternary structure, heptamer of 7 subunits arranged in a ring. Interacts with the chaperonin GroEL.

It localises to the cytoplasm. Functionally, together with the chaperonin GroEL, plays an essential role in assisting protein folding. The GroEL-GroES system forms a nano-cage that allows encapsulation of the non-native substrate proteins and provides a physical environment optimized to promote and accelerate protein folding. GroES binds to the apical surface of the GroEL ring, thereby capping the opening of the GroEL channel. The chain is Co-chaperonin GroES from Klebsiella pneumoniae (strain 342).